A 448-amino-acid polypeptide reads, in one-letter code: Homogentisate 1,2-dioxygenase (448 aa).

Histidine 303 functions as the Proton acceptor in the catalytic mechanism. Fe cation contacts are provided by histidine 346 and glutamate 352. Positions 361 and 382 each coordinate homogentisate. Histidine 382 contacts Fe cation.

It belongs to the homogentisate dioxygenase family. Hexamer; dimer of trimers. Fe cation serves as cofactor.

It catalyses the reaction homogentisate + O2 = 4-maleylacetoacetate + H(+). It participates in amino-acid degradation; L-phenylalanine degradation; acetoacetate and fumarate from L-phenylalanine: step 4/6. Involved in the catabolism of homogentisate (2,5-dihydroxyphenylacetate or 2,5-OH-PhAc), a central intermediate in the degradation of phenylalanine and tyrosine. Catalyzes the oxidative ring cleavage of the aromatic ring of homogentisate to yield maleylacetoacetate. The protein is Homogentisate 1,2-dioxygenase of Rhodopseudomonas palustris (strain BisB18).